Reading from the N-terminus, the 462-residue chain is uncharacterized protein (462 aa).

WD repeat units follow at residues 170 to 209 (GGERPIAIVRFSNNGNHFASGSWGGQVKVWNSDNLSEVQL), 212 to 260 (GHTD…PLLR), 263 to 302 (GHLARVGRVAFHPSGDYLVSASFDTTWRLWDVHTGVELLM), 305 to 344 (GHSEGIFSIACQPDGSLVSSGGNDAIGRIWDLRSGKSIMV), 347 to 386 (EHIRQIVAMAWSPNGYQLATSSADDTVKIWDLRKVSLAHT), 389 to 430 (AHSS…LIKS), and 433 to 462 (GHEEKVMSVDGYGDRFISSGYDRTIKLWYP).

The protein localises to the cytoplasm. This is an uncharacterized protein from Schizosaccharomyces pombe (strain 972 / ATCC 24843) (Fission yeast).